The sequence spans 32 residues: U6-ctenitoxin-Pr1a (32 aa).

3 disulfides stabilise this stretch: C3–C17, C10–C21, and C16–C30.

As to expression, expressed by the venom gland.

Its subcellular location is the secreted. This Phoneutria reidyi (Brazilian Amazonian armed spider) protein is U6-ctenitoxin-Pr1a.